We begin with the raw amino-acid sequence, 234 residues long: MNGAQGQPAWVLHRRAFRESSTLVELFSQEYGRIGAVANGVRRRGWSGQLEPFIPLQVSWRGRGDLKTLTTVDQAGRGYALRGGALACGFYMAEVLLALTRREDPHPRTWERYAVAVDCLATDDAEPALRRFELALLEESGYGLELEQDVHGEPVVAQARYRYSPERGADRAGTGECGVEVSGATLLALAATEGQGLSEEPVRSEARRLMRAVIQQHLGGRRLRSREMFRSLRD.

The protein belongs to the RecO family.

Involved in DNA repair and RecF pathway recombination. This Halorhodospira halophila (strain DSM 244 / SL1) (Ectothiorhodospira halophila (strain DSM 244 / SL1)) protein is DNA repair protein RecO.